Reading from the N-terminus, the 289-residue chain is Shikimate dehydrogenase (NADP(+)) (289 aa).

Residues 22–24 and Thr-69 each bind shikimate; that span reads SRS. Lys-73 serves as the catalytic Proton acceptor. Position 85 (Glu-85) interacts with NADP(+). Residues Asn-94 and Asp-109 each coordinate shikimate. NADP(+)-binding positions include 134 to 138, 158 to 163, and Ile-226; these read GAGGA and NRTLSR. Tyr-228 lines the shikimate pocket. Gly-249 serves as a coordination point for NADP(+).

This sequence belongs to the shikimate dehydrogenase family. In terms of assembly, homodimer.

It carries out the reaction shikimate + NADP(+) = 3-dehydroshikimate + NADPH + H(+). It functions in the pathway metabolic intermediate biosynthesis; chorismate biosynthesis; chorismate from D-erythrose 4-phosphate and phosphoenolpyruvate: step 4/7. In terms of biological role, involved in the biosynthesis of the chorismate, which leads to the biosynthesis of aromatic amino acids. Catalyzes the reversible NADPH linked reduction of 3-dehydroshikimate (DHSA) to yield shikimate (SA). The polypeptide is Shikimate dehydrogenase (NADP(+)) (Brucella ovis (strain ATCC 25840 / 63/290 / NCTC 10512)).